Consider the following 367-residue polypeptide: S-adenosylmethionine:tRNA ribosyltransferase-isomerase (367 aa).

It belongs to the QueA family. As to quaternary structure, monomer.

The protein localises to the cytoplasm. The enzyme catalyses 7-aminomethyl-7-carbaguanosine(34) in tRNA + S-adenosyl-L-methionine = epoxyqueuosine(34) in tRNA + adenine + L-methionine + 2 H(+). It participates in tRNA modification; tRNA-queuosine biosynthesis. Transfers and isomerizes the ribose moiety from AdoMet to the 7-aminomethyl group of 7-deazaguanine (preQ1-tRNA) to give epoxyqueuosine (oQ-tRNA). This chain is S-adenosylmethionine:tRNA ribosyltransferase-isomerase, found in Beijerinckia indica subsp. indica (strain ATCC 9039 / DSM 1715 / NCIMB 8712).